Here is a 77-residue protein sequence, read N- to C-terminus: uncharacterized protein (77 aa).

4Fe-4S ferredoxin-type domains are found at residues 3 to 32 (VEII…WTKD) and 36 to 65 (KYYA…IKVV). Positions 12, 15, 18, 22, 45, 48, 51, and 55 each coordinate [4Fe-4S] cluster.

The cofactor is [4Fe-4S] cluster.

Functionally, ferredoxins are iron-sulfur proteins that transfer electrons probably in the CO-dehydrogenase complex. This is an uncharacterized protein from Methanocaldococcus jannaschii (strain ATCC 43067 / DSM 2661 / JAL-1 / JCM 10045 / NBRC 100440) (Methanococcus jannaschii).